The chain runs to 404 residues: Probable tRNA sulfurtransferase (404 aa).

The THUMP domain maps to 60–165; sequence QPIVEALKLV…DEAAYISYEE (106 aa). Residues 183 to 184, 208 to 209, Arg265, Gly287, and Gln296 each bind ATP; these read ML and HF.

Belongs to the ThiI family.

It localises to the cytoplasm. The enzyme catalyses [ThiI sulfur-carrier protein]-S-sulfanyl-L-cysteine + a uridine in tRNA + 2 reduced [2Fe-2S]-[ferredoxin] + ATP + H(+) = [ThiI sulfur-carrier protein]-L-cysteine + a 4-thiouridine in tRNA + 2 oxidized [2Fe-2S]-[ferredoxin] + AMP + diphosphate. The catalysed reaction is [ThiS sulfur-carrier protein]-C-terminal Gly-Gly-AMP + S-sulfanyl-L-cysteinyl-[cysteine desulfurase] + AH2 = [ThiS sulfur-carrier protein]-C-terminal-Gly-aminoethanethioate + L-cysteinyl-[cysteine desulfurase] + A + AMP + 2 H(+). Its pathway is cofactor biosynthesis; thiamine diphosphate biosynthesis. In terms of biological role, catalyzes the ATP-dependent transfer of a sulfur to tRNA to produce 4-thiouridine in position 8 of tRNAs, which functions as a near-UV photosensor. Also catalyzes the transfer of sulfur to the sulfur carrier protein ThiS, forming ThiS-thiocarboxylate. This is a step in the synthesis of thiazole, in the thiamine biosynthesis pathway. The sulfur is donated as persulfide by IscS. In Streptococcus pyogenes serotype M2 (strain MGAS10270), this protein is Probable tRNA sulfurtransferase.